The following is a 113-amino-acid chain: Hydrogenase maturation factor HypA (113 aa).

Residue H2 participates in Ni(2+) binding. The Zn(2+) site is built by C70, C73, C86, and C88.

Belongs to the HypA/HybF family.

Its function is as follows. Involved in the maturation of [NiFe] hydrogenases. Required for nickel insertion into the metal center of the hydrogenase. The chain is Hydrogenase maturation factor HypA from Nostoc punctiforme (strain ATCC 29133 / PCC 73102).